The primary structure comprises 98 residues: NADH-ubiquinone oxidoreductase chain 4L (98 aa).

Helical transmembrane passes span 2-22 (TPIF…TLIF), 29-49 (SLLC…LIIL), and 61-81 (ILLL…LVMV).

This sequence belongs to the complex I subunit 4L family. Core subunit of respiratory chain NADH dehydrogenase (Complex I) which is composed of 45 different subunits.

The protein resides in the mitochondrion inner membrane. It catalyses the reaction a ubiquinone + NADH + 5 H(+)(in) = a ubiquinol + NAD(+) + 4 H(+)(out). Functionally, core subunit of the mitochondrial membrane respiratory chain NADH dehydrogenase (Complex I) which catalyzes electron transfer from NADH through the respiratory chain, using ubiquinone as an electron acceptor. Part of the enzyme membrane arm which is embedded in the lipid bilayer and involved in proton translocation. The protein is NADH-ubiquinone oxidoreductase chain 4L (MT-ND4L) of Avahi cleesei (Cleese's woolly lemur).